A 496-amino-acid chain; its full sequence is Probable cytosol aminopeptidase (496 aa).

Positions 257 and 262 each coordinate Mn(2+). Residue K269 is part of the active site. Mn(2+)-binding residues include D281, D341, and E343. R345 is a catalytic residue.

This sequence belongs to the peptidase M17 family. Requires Mn(2+) as cofactor.

It localises to the cytoplasm. It catalyses the reaction Release of an N-terminal amino acid, Xaa-|-Yaa-, in which Xaa is preferably Leu, but may be other amino acids including Pro although not Arg or Lys, and Yaa may be Pro. Amino acid amides and methyl esters are also readily hydrolyzed, but rates on arylamides are exceedingly low.. The catalysed reaction is Release of an N-terminal amino acid, preferentially leucine, but not glutamic or aspartic acids.. Functionally, presumably involved in the processing and regular turnover of intracellular proteins. Catalyzes the removal of unsubstituted N-terminal amino acids from various peptides. The chain is Probable cytosol aminopeptidase from Prochlorococcus marinus (strain SARG / CCMP1375 / SS120).